A 176-amino-acid chain; its full sequence is MSLLNVPAGKDLPEDIYVVIEIPANADPIKYEIDKESGALFVDRFMSTAMFYPCNYGYINHTLSLDGDPVDVLVPTPYPLQPGSVIRCRPVGVLKMTDEAGEDAKLIAVPHTKLSKEYDHIKDVNDLPELLKAQIAHFFEHYKDLEKGKWVKVEGWENAEAAKAEIVASFERAKNK.

Substrate contacts are provided by Lys-30, Arg-44, and Tyr-56. The Mg(2+) site is built by Asp-66, Asp-71, and Asp-103. Tyr-142 provides a ligand contact to substrate.

It belongs to the PPase family. Homohexamer. The cofactor is Mg(2+).

It is found in the cytoplasm. It catalyses the reaction diphosphate + H2O = 2 phosphate + H(+). Functionally, catalyzes the hydrolysis of inorganic pyrophosphate (PPi) forming two phosphate ions. This is Inorganic pyrophosphatase from Escherichia coli O6:H1 (strain CFT073 / ATCC 700928 / UPEC).